A 505-amino-acid chain; its full sequence is 2,3-bisphosphoglycerate-independent phosphoglycerate mutase (505 aa).

Mn(2+)-binding residues include Asp11 and Ser61. The active-site Phosphoserine intermediate is the Ser61. Substrate contacts are provided by residues His122, 152-153, Arg184, Arg190, 258-261, and Lys331; these read RD and RPDR. Asp396, His400, Asp437, His438, and His455 together coordinate Mn(2+).

It belongs to the BPG-independent phosphoglycerate mutase family. Monomer. Requires Mn(2+) as cofactor.

It catalyses the reaction (2R)-2-phosphoglycerate = (2R)-3-phosphoglycerate. It participates in carbohydrate degradation; glycolysis; pyruvate from D-glyceraldehyde 3-phosphate: step 3/5. In terms of biological role, catalyzes the interconversion of 2-phosphoglycerate and 3-phosphoglycerate. In Mesomycoplasma hyopneumoniae (strain 7448) (Mycoplasma hyopneumoniae), this protein is 2,3-bisphosphoglycerate-independent phosphoglycerate mutase.